A 925-amino-acid polypeptide reads, in one-letter code: Ectonucleotide pyrophosphatase/phosphodiesterase family member 1 (925 aa).

The segment covering 1–17 (MERDGCAGGGSRGGEGG) has biased composition (gly residues). The interval 1–43 (MERDGCAGGGSRGGEGGRAPREGPAGNGRDRGRSHAAEAPGDP) is disordered. Residues 1–76 (MERDGCAGGG…RTAKDPNTYK (76 aa)) lie on the Cytoplasmic side of the membrane. The Di-leucine motif motif lies at 45-52 (AAASLLAP). Residues 77 to 97 (VLSLVLSVCVLTTILGCIFGL) traverse the membrane as a helical; Signal-anchor for type II membrane protein segment. At 98-925 (KPSCAKEVKS…THLPTFSQED (828 aa)) the chain is on the extracellular side. SMB domains lie at 104-144 (EVKS…IEPE) and 145-189 (HIWT…GEKS). Intrachain disulfides connect Cys-108/Cys-122, Cys-112/Cys-140, Cys-120/Cys-133, Cys-126/Cys-132, Cys-149/Cys-166, Cys-154/Cys-184, Cys-164/Cys-177, Cys-170/Cys-176, Cys-195/Cys-241, and Cys-203/Cys-415. The N-linked (GlcNAc...) asparagine glycan is linked to Asn-179. The phosphodiesterase stretch occupies residues 191–591 (VEEPCESINE…APNNGTHGSL (401 aa)). AMP contacts are provided by Asp-218, Thr-256, and Asn-277. 2 residues coordinate Zn(2+): Asp-218 and Thr-256. The active-site AMP-threonine intermediate is the Thr-256. Positions 256 and 277 each coordinate CMP. DTMP-binding residues include Thr-256 and Asn-277. Positions 256 and 277 each coordinate GMP. Thr-256 carries the post-translational modification Phosphothreonine. An N-linked (GlcNAc...) asparagine glycan is attached at Asn-285. Residues Leu-290, Lys-295, and Tyr-340 each contribute to the GMP site. Residues Lys-295 and Tyr-340 each contribute to the AMP site. Residues Lys-295 and Tyr-340 each contribute to the CMP site. Position 340 (Tyr-340) interacts with dTMP. Residue Asn-341 is glycosylated (N-linked (GlcNAc...) asparagine). Asp-376 lines the AMP pocket. The Zn(2+) site is built by Asp-376, His-380, Asp-423, and His-424. Asp-376 provides a ligand contact to CMP. A dTMP-binding site is contributed by Asp-376. Residue Asp-376 participates in GMP binding. Residue His-380 coordinates 2',3'-cGAMP. His-424 provides a ligand contact to AMP. CMP is bound at residue His-424. Position 424 (His-424) interacts with dTMP. His-424 contacts GMP. 6 disulfides stabilise this stretch: Cys-431–Cys-530, Cys-480–Cys-868, Cys-614–Cys-672, Cys-626–Cys-726, Cys-628–Cys-711, and Cys-838–Cys-848. A glycan (N-linked (GlcNAc...) asparagine) is linked at Asn-477. Residue Ser-532 coordinates 2',3'-cGAMP. His-535 contributes to the AMP binding site. Zn(2+) is bound at residue His-535. Residue His-535 participates in CMP binding. Residue His-535 participates in dTMP binding. His-535 lines the GMP pocket. N-linked (GlcNAc...) asparagine glycosylation is found at Asn-585, Asn-643, Asn-700, Asn-731, and Asn-748. A linker region spans residues 597–647 (NPVYTPKHPKEVHPLVQCPFTRNPRDNLGCSCNPSILPIEDFQTQFNLTVA). Residues 654–925 (HETLPYGRPR…THLPTFSQED (272 aa)) are nuclease-like domain. Positions 800, 802, 804, 806, and 808 each coordinate Ca(2+).

Belongs to the nucleotide pyrophosphatase/phosphodiesterase family. In terms of assembly, homodimer. Interacts with INSR; leading to inhibit INSR autophosphorylation and subsequent activation of INSR kinase activity. Monomeric. Zn(2+) is required as a cofactor. Autophosphorylated as part of the catalytic cycle of phosphodiesterase/pyrophosphatase activity. Post-translationally, N-glycosylated. In terms of processing, the secreted form is produced through cleavage at Lys-103 by intracellular processing. Expressed in plasma cells and also in a number of non-lymphoid tissues, including the distal convoluted tubule of the kidney, chondrocytes and epididymis. Expressed in melanocytes but not in keratinocytes.

It is found in the cell membrane. The protein localises to the basolateral cell membrane. The protein resides in the secreted. It carries out the reaction Hydrolytically removes 5'-nucleotides successively from the 3'-hydroxy termini of 3'-hydroxy-terminated oligonucleotides.. The catalysed reaction is a ribonucleoside 5'-triphosphate + H2O = a ribonucleoside 5'-phosphate + diphosphate + H(+). It catalyses the reaction ATP + H2O = AMP + diphosphate + H(+). The enzyme catalyses UTP + H2O = UMP + diphosphate + H(+). It carries out the reaction GTP + H2O = GMP + diphosphate + H(+). The catalysed reaction is CTP + H2O = CMP + diphosphate + H(+). It catalyses the reaction 2',3'-cGAMP + 2 H2O = GMP + AMP + 2 H(+). The enzyme catalyses P(1),P(4)-bis(5'-adenosyl) tetraphosphate + H2O = AMP + ATP + 2 H(+). It carries out the reaction 3',5'-cyclic AMP + H2O = AMP + H(+). Its activity is regulated as follows. At low concentrations of ATP, a phosphorylated intermediate is formed which inhibits further hydrolysis. In terms of biological role, nucleotide pyrophosphatase that generates diphosphate (PPi) and functions in bone mineralization and soft tissue calcification by regulating pyrophosphate levels. PPi inhibits bone mineralization and soft tissue calcification by binding to nascent hydroxyapatite crystals, thereby preventing further growth of these crystals. Preferentially hydrolyzes ATP, but can also hydrolyze other nucleoside 5' triphosphates such as GTP, CTP and UTP to their corresponding monophosphates with release of pyrophosphate, as well as diadenosine polyphosphates, and also 3',5'-cAMP to AMP. May also be involved in the regulation of the availability of nucleotide sugars in the endoplasmic reticulum and Golgi, and the regulation of purinergic signaling. Inhibits ectopic joint calcification and maintains articular chondrocytes by repressing hedgehog signaling; it is however unclear whether hedgehog inhibition is direct or indirect. Appears to modulate insulin sensitivity and function. Also involved in melanogenesis. Also able to hydrolyze 2',3'-cGAMP (cyclic GMP-AMP), a second messenger that activates TMEM173/STING and triggers type-I interferon production. 2',3'-cGAMP degradation takes place in the lumen or extracellular space, and not in the cytosol where it is produced; the role of 2',3'-cGAMP hydrolysis is therefore unclear. Not able to hydrolyze the 2',3'-cGAMP linkage isomer 3'-3'-cGAMP. This Homo sapiens (Human) protein is Ectonucleotide pyrophosphatase/phosphodiesterase family member 1.